The chain runs to 115 residues: Large ribosomal subunit protein uL24 (115 aa).

It belongs to the universal ribosomal protein uL24 family. In terms of assembly, part of the 50S ribosomal subunit.

Functionally, one of two assembly initiator proteins, it binds directly to the 5'-end of the 23S rRNA, where it nucleates assembly of the 50S subunit. Its function is as follows. One of the proteins that surrounds the polypeptide exit tunnel on the outside of the subunit. This is Large ribosomal subunit protein uL24 from Beutenbergia cavernae (strain ATCC BAA-8 / DSM 12333 / CCUG 43141 / JCM 11478 / NBRC 16432 / NCIMB 13614 / HKI 0122).